Here is a 179-residue protein sequence, read N- to C-terminus: ADP-ribosylation factor-like protein 5A (179 aa).

Residue Gly2 is the site of N-myristoyl glycine attachment. GTP contacts are provided by residues 23 to 30 (GLDNAGKT), 66 to 70 (DIGGQ), 125 to 128 (NKQD), and Ala159.

It belongs to the small GTPase superfamily. Arf family. In terms of tissue distribution, low amounts were found in most tissues examined with highest levels in brain, intestine and thymus.

In terms of biological role, lacks ADP-ribosylation enhancing activity. This Rattus norvegicus (Rat) protein is ADP-ribosylation factor-like protein 5A (Arl5a).